The primary structure comprises 366 residues: Carbamoyl phosphate synthase small chain (366 aa).

The CPSase stretch occupies residues 1 to 171 (MLEKRYLVLE…KTPYVSTGSD (171 aa)). 3 residues coordinate L-glutamine: serine 47, glycine 221, and glycine 223. The Glutamine amidotransferase type-1 domain maps to 173–360 (SVVLLDFGKK…ITMMKDFKEK (188 aa)). Cysteine 248 functions as the Nucleophile in the catalytic mechanism. 5 residues coordinate L-glutamine: leucine 249, glutamine 252, asparagine 290, glycine 292, and tyrosine 293. Catalysis depends on residues histidine 333 and glutamate 335.

Belongs to the CarA family. As to quaternary structure, composed of two chains; the small (or glutamine) chain promotes the hydrolysis of glutamine to ammonia, which is used by the large (or ammonia) chain to synthesize carbamoyl phosphate. Tetramer of heterodimers (alpha,beta)4.

The catalysed reaction is hydrogencarbonate + L-glutamine + 2 ATP + H2O = carbamoyl phosphate + L-glutamate + 2 ADP + phosphate + 2 H(+). It carries out the reaction L-glutamine + H2O = L-glutamate + NH4(+). Its pathway is amino-acid biosynthesis; L-arginine biosynthesis; carbamoyl phosphate from bicarbonate: step 1/1. It functions in the pathway pyrimidine metabolism; UMP biosynthesis via de novo pathway; (S)-dihydroorotate from bicarbonate: step 1/3. Small subunit of the glutamine-dependent carbamoyl phosphate synthetase (CPSase). CPSase catalyzes the formation of carbamoyl phosphate from the ammonia moiety of glutamine, carbonate, and phosphate donated by ATP, constituting the first step of 2 biosynthetic pathways, one leading to arginine and/or urea and the other to pyrimidine nucleotides. The small subunit (glutamine amidotransferase) binds and cleaves glutamine to supply the large subunit with the substrate ammonia. This Staphylococcus epidermidis (strain ATCC 35984 / DSM 28319 / BCRC 17069 / CCUG 31568 / BM 3577 / RP62A) protein is Carbamoyl phosphate synthase small chain.